The primary structure comprises 926 residues: Serine/threonine-protein kinase SIK2 (926 aa).

Residues 20-271 (YDIEGTLGKG…IAQIKEHKWM (252 aa)) enclose the Protein kinase domain. Phosphothreonine is present on Thr25. Residues 26-34 (LGKGNFAVV) and Lys49 contribute to the ATP site. Residue Lys53 is modified to N6-acetyllysine; by EP300. Asp142 (proton acceptor) is an active-site residue. Residue Thr175 is modified to Phosphothreonine; by LKB1. Positions 295–335 (EFNEQVLRLMHSLGIDQQKTIESLQNKSYNHFAAIYFLLVE) constitute a UBA domain. Residue Thr484 is modified to Phosphothreonine. A phosphoserine mark is found at Ser534 and Ser587. Low complexity-rich tracts occupy residues 644–659 (SSCPQEEVSQQQESVS) and 742–756 (SSYPQPSQQLPLPRQ). 3 disordered regions span residues 644-666 (SSCPQEEVSQQQESVSTLPASVH), 742-776 (SSYPQPSQQLPLPRQETPPPSQQAPPFSLTQPLSP), and 801-896 (PLPS…SSYD). Residues 765–774 (APPFSLTQPL) are compositionally biased toward polar residues. Over residues 822–834 (QPPPPPPPPPPRQ) the composition is skewed to pro residues.

Belongs to the protein kinase superfamily. CAMK Ser/Thr protein kinase family. SNF1 subfamily. Interacts with and phosphorylates TORC2/CRTC2. It depends on Mg(2+) as a cofactor. Phosphorylated at Thr-175 by STK11/LKB1 in complex with STE20-related adapter-alpha (STRADA) pseudo kinase and CAB39. Phosphorylated at Thr-484 in response to insulin in adipocytes. In terms of processing, acetylation at Lys-53 inhibits kinase activity. Deacetylated by HDAC6.

Its subcellular location is the cytoplasm. The protein localises to the endoplasmic reticulum membrane. The catalysed reaction is L-seryl-[protein] + ATP = O-phospho-L-seryl-[protein] + ADP + H(+). The enzyme catalyses L-threonyl-[protein] + ATP = O-phospho-L-threonyl-[protein] + ADP + H(+). With respect to regulation, activated by phosphorylation on Thr-175. Functionally, serine/threonine-protein kinase that plays a role in many biological processes such as fatty acid oxidation, autophagy, immune response or glucose metabolism. Phosphorylates 'Ser-794' of IRS1 in insulin-stimulated adipocytes, potentially modulating the efficiency of insulin signal transduction. Inhibits CREB activity by phosphorylating and repressing TORCs, the CREB-specific coactivators. Phosphorylates EP300 and thus inhibits its histone acetyltransferase activity. In turn, regulates the DNA-binding ability of several transcription factors such as PPARA or MLXIPL. Also plays a role in thymic T-cell development. The chain is Serine/threonine-protein kinase SIK2 (SIK2) from Homo sapiens (Human).